The following is a 246-amino-acid chain: Trypsin-5 (246 aa).

A signal peptide spans 1–15 (MNSLLFLALVGAAVA). Residues 16 to 23 (FPVDDDDK) constitute a propeptide, activation peptide. The Peptidase S1 domain occupies 24–244 (IVGGYTCREN…YVDWIQDTIA (221 aa)). C48 and C64 are oxidised to a cystine. Catalysis depends on charge relay system residues H63 and D107. Intrachain disulfides connect C139-C206, C171-C185, and C196-C220. S200 serves as the catalytic Charge relay system.

It belongs to the peptidase S1 family. Post-translationally, proteolytically cleaved and activated by an autocatalytic mechanism. Cleavage by CTRC inhibits autoactivation. As to expression, expressed in the heart, lung, brain, kidney, liver, epididymis, ovary and uterus. Expression in the testis is limited to round and elongating spermatids.

It localises to the cytoplasmic vesicle. Its subcellular location is the secretory vesicle. The protein localises to the acrosome. It catalyses the reaction Preferential cleavage: Arg-|-Xaa, Lys-|-Xaa.. With respect to regulation, activated by autocatalytic cleavage. Cleavage by CTRC inhibits autoactivation. Its function is as follows. Serine protease capable of autoactivation. The polypeptide is Trypsin-5 (Mus musculus (Mouse)).